We begin with the raw amino-acid sequence, 685 residues long: DNA ligase (685 aa).

Residues 47 to 51 (DSEYD), 96 to 97 (SL), and glutamate 125 each bind NAD(+). The active-site N6-AMP-lysine intermediate is the lysine 127. Residues arginine 148, glutamate 185, lysine 304, and lysine 328 each contribute to the NAD(+) site. 4 residues coordinate Zn(2+): cysteine 422, cysteine 425, cysteine 440, and cysteine 446. Positions 605-685 (ADAQPLKGQT…ALLALFAANR (81 aa)) constitute a BRCT domain.

This sequence belongs to the NAD-dependent DNA ligase family. LigA subfamily. Requires Mg(2+) as cofactor. It depends on Mn(2+) as a cofactor.

The catalysed reaction is NAD(+) + (deoxyribonucleotide)n-3'-hydroxyl + 5'-phospho-(deoxyribonucleotide)m = (deoxyribonucleotide)n+m + AMP + beta-nicotinamide D-nucleotide.. DNA ligase that catalyzes the formation of phosphodiester linkages between 5'-phosphoryl and 3'-hydroxyl groups in double-stranded DNA using NAD as a coenzyme and as the energy source for the reaction. It is essential for DNA replication and repair of damaged DNA. The sequence is that of DNA ligase from Shewanella sp. (strain W3-18-1).